The primary structure comprises 89 residues: MALTAEQKKEILGQYGLHESDTGSPEAQVALLTKRISDLTEHLKQHKHDHHSRRGLLLLVGRRRRLLKYVAQVDVERYRSLIERLGLRR.

It belongs to the universal ribosomal protein uS15 family. In terms of assembly, part of the 30S ribosomal subunit. Forms a bridge to the 50S subunit in the 70S ribosome, contacting the 23S rRNA.

Functionally, one of the primary rRNA binding proteins, it binds directly to 16S rRNA where it helps nucleate assembly of the platform of the 30S subunit by binding and bridging several RNA helices of the 16S rRNA. In terms of biological role, forms an intersubunit bridge (bridge B4) with the 23S rRNA of the 50S subunit in the ribosome. In Mycobacterium sp. (strain JLS), this protein is Small ribosomal subunit protein uS15.